Here is a 338-residue protein sequence, read N- to C-terminus: MNLSKFKRYPLTFGPSPITPLKRLSEHLGGKVELYAKREDCNSGLAFGGNKTRKLEYLVPEAIDGGYDTLVSIGGIQSNQTRQVAAVAAHLGMKCVLVQENWVNYSDALYDRVGNIEMSRIMGADVRLDSAGFDIGIRPSWEKAMADVEESGGKPFPIPAGCSEHPYGGLGFVRFADEVRQQEEELGFKFDYIVVCSVTGSTHAGMLVGFAADGRAQRVIGIDASAKPEKTRAQVLRIAQNTAKLVELGREITAEDVVLDTRYAYPEYGLPNDGTLEAIRLCARLEGVLTDPVYEGKSMHGMIDMVRNGEFPEGSKVLYAHLGGVPALNAYSFLFKDG.

K51 carries the N6-(pyridoxal phosphate)lysine modification. The active-site Nucleophile is the S78.

Belongs to the ACC deaminase/D-cysteine desulfhydrase family. In terms of assembly, homotrimer. It depends on pyridoxal 5'-phosphate as a cofactor.

It catalyses the reaction 1-aminocyclopropane-1-carboxylate + H2O = 2-oxobutanoate + NH4(+). Catalyzes a cyclopropane ring-opening reaction, the irreversible conversion of 1-aminocyclopropane-1-carboxylate (ACC) to ammonia and alpha-ketobutyrate. Allows growth on ACC as a nitrogen source. The sequence is that of 1-aminocyclopropane-1-carboxylate deaminase from Pseudomonas syringae pv. syringae (strain B728a).